The following is a 66-amino-acid chain: DNA-directed RNA polymerase subunit Rpo10 (66 aa).

Residues Cys7, Cys10, Cys44, and Cys45 each contribute to the Zn(2+) site.

It belongs to the archaeal Rpo10/eukaryotic RPB10 RNA polymerase subunit family. Part of the RNA polymerase complex. It depends on Zn(2+) as a cofactor.

It localises to the cytoplasm. The catalysed reaction is RNA(n) + a ribonucleoside 5'-triphosphate = RNA(n+1) + diphosphate. In terms of biological role, DNA-dependent RNA polymerase (RNAP) catalyzes the transcription of DNA into RNA using the four ribonucleoside triphosphates as substrates. This chain is DNA-directed RNA polymerase subunit Rpo10, found in Pyrobaculum aerophilum (strain ATCC 51768 / DSM 7523 / JCM 9630 / CIP 104966 / NBRC 100827 / IM2).